The following is a 119-amino-acid chain: Holo-[acyl-carrier-protein] synthase (119 aa).

2 residues coordinate Mg(2+): aspartate 8 and glutamate 59.

Belongs to the P-Pant transferase superfamily. AcpS family. Requires Mg(2+) as cofactor.

The protein localises to the cytoplasm. The catalysed reaction is apo-[ACP] + CoA = holo-[ACP] + adenosine 3',5'-bisphosphate + H(+). Functionally, transfers the 4'-phosphopantetheine moiety from coenzyme A to a Ser of acyl-carrier-protein. This is Holo-[acyl-carrier-protein] synthase from Lactococcus lactis subsp. cremoris (strain SK11).